Reading from the N-terminus, the 281-residue chain is Bifunctional protein FolD (281 aa).

NADP(+)-binding positions include 165–167 (GRG), Thr192, and Val233.

It belongs to the tetrahydrofolate dehydrogenase/cyclohydrolase family. In terms of assembly, homodimer.

It catalyses the reaction (6R)-5,10-methylene-5,6,7,8-tetrahydrofolate + NADP(+) = (6R)-5,10-methenyltetrahydrofolate + NADPH. The enzyme catalyses (6R)-5,10-methenyltetrahydrofolate + H2O = (6R)-10-formyltetrahydrofolate + H(+). It functions in the pathway one-carbon metabolism; tetrahydrofolate interconversion. Catalyzes the oxidation of 5,10-methylenetetrahydrofolate to 5,10-methenyltetrahydrofolate and then the hydrolysis of 5,10-methenyltetrahydrofolate to 10-formyltetrahydrofolate. The chain is Bifunctional protein FolD from Mycobacterium bovis (strain BCG / Tokyo 172 / ATCC 35737 / TMC 1019).